Reading from the N-terminus, the 284-residue chain is Bifunctional protein FolD (284 aa).

NADP(+) is bound by residues 166-168 and Ile232; that span reads GAS.

It belongs to the tetrahydrofolate dehydrogenase/cyclohydrolase family. Homodimer.

The enzyme catalyses (6R)-5,10-methylene-5,6,7,8-tetrahydrofolate + NADP(+) = (6R)-5,10-methenyltetrahydrofolate + NADPH. It carries out the reaction (6R)-5,10-methenyltetrahydrofolate + H2O = (6R)-10-formyltetrahydrofolate + H(+). The protein operates within one-carbon metabolism; tetrahydrofolate interconversion. Functionally, catalyzes the oxidation of 5,10-methylenetetrahydrofolate to 5,10-methenyltetrahydrofolate and then the hydrolysis of 5,10-methenyltetrahydrofolate to 10-formyltetrahydrofolate. The polypeptide is Bifunctional protein FolD (Pseudoalteromonas translucida (strain TAC 125)).